Consider the following 455-residue polypeptide: ATP-dependent protease ATPase subunit HslU (455 aa).

ATP contacts are provided by residues Val23, 65–70, Asp266, Glu333, and Arg405; that span reads GVGKTE.

This sequence belongs to the ClpX chaperone family. HslU subfamily. A double ring-shaped homohexamer of HslV is capped on each side by a ring-shaped HslU homohexamer. The assembly of the HslU/HslV complex is dependent on binding of ATP.

It localises to the cytoplasm. ATPase subunit of a proteasome-like degradation complex; this subunit has chaperone activity. The binding of ATP and its subsequent hydrolysis by HslU are essential for unfolding of protein substrates subsequently hydrolyzed by HslV. HslU recognizes the N-terminal part of its protein substrates and unfolds these before they are guided to HslV for hydrolysis. The sequence is that of ATP-dependent protease ATPase subunit HslU from Xanthomonas campestris pv. campestris (strain 8004).